Reading from the N-terminus, the 442-residue chain is MALVTPRTLSGFKDRLPKEALAKAHLLNKVSNVFMNFGFVPIETPHLEYADVLIKQGSDEIQKELYRFKDHGGRDVALRFDLTVPLARFVSQYKNEVGLPFKRYAIGNVFRGERAQRGRYREFTQCDFDFIGSDSISCDAEILQVIYASLMKLGIEEFTIWLNHRSILNGICEYCGITQEKDINVALRIIDKLDKIGKERVSEELQKELGLNNNQVENLLEYTSIKQQGESESFFRQISFMEEWNDSIKKGIEDLKMLYEVLSSLQMDRDTYRVNFSIARGLGYYTGIVYETTLNALKSIGSVCSGGRYDNLTRTFSKEKMSGVGASIGIDRLLAALEELELLQKRATSARALIVCMDRLYFGYAHLLAESFRCSEIPIEVYPEASKLKKQFTYAHLKGYEFVVVIGENEFNTKTLTLKNMTSGVQIDSISFLKALALIQEE.

The protein belongs to the class-II aminoacyl-tRNA synthetase family. As to quaternary structure, homodimer.

The protein localises to the cytoplasm. The catalysed reaction is tRNA(His) + L-histidine + ATP = L-histidyl-tRNA(His) + AMP + diphosphate + H(+). In Helicobacter hepaticus (strain ATCC 51449 / 3B1), this protein is Histidine--tRNA ligase.